The chain runs to 467 residues: MSKDTLFDKVWDLHKVSSLPGGSDQIFIGLHLIHEVTSPQAFGALKDKNLRVKFPSRTVATVDHIVPTDNQSRPFKDNLAEQMIETLEKNCIEHKIRFFNIGSGNQGIVHVVAPELGLTQPGMTIACGDSHTSTHGAFGSIAFGIGTSQVRDVLATQTIAMNKLKVRQIWCENKLSNGVYAKDLVLHIINKLGVKAGVGFAYEFAGPAINSLSMEERMTICNMSIEGGARCGYINPDEKTFSYIKNKLCAPRNENWDEALLWWKSLKSDANSIYDDVTKIDASKVEPTVTWGITPGQSVGINQKIPLLEELSPDDQFVAKEAYEYMGFKPGQSIKDTPIDVCFIGSCTNGRISDLRVAAKVVKDKKVSQNIKAFVVPGSEKVAKEAKIEGLDKIFLDAGFQWREPGCSMCLAMNSDKLIGNQLSASSSNRNFKGRQGSPNGRTLLMSPAMVAAAAISGKVTDIRNFM.

Residues C347, C407, and C410 each coordinate [4Fe-4S] cluster.

It belongs to the aconitase/IPM isomerase family. LeuC type 1 subfamily. As to quaternary structure, heterodimer of LeuC and LeuD. The cofactor is [4Fe-4S] cluster.

It carries out the reaction (2R,3S)-3-isopropylmalate = (2S)-2-isopropylmalate. Its pathway is amino-acid biosynthesis; L-leucine biosynthesis; L-leucine from 3-methyl-2-oxobutanoate: step 2/4. Its function is as follows. Catalyzes the isomerization between 2-isopropylmalate and 3-isopropylmalate, via the formation of 2-isopropylmaleate. This Prochlorococcus marinus (strain MIT 9301) protein is 3-isopropylmalate dehydratase large subunit.